We begin with the raw amino-acid sequence, 159 residues long: NADH-quinone oxidoreductase subunit I (159 aa).

4Fe-4S ferredoxin-type domains are found at residues 51-80 (RRYENGEERCIACKLCEAICPAQAIVIEAD) and 90-119 (TRYDIDMTKCIYCGLCQEACPVDAIVEGPN). [4Fe-4S] cluster-binding residues include cysteine 60, cysteine 63, cysteine 66, cysteine 70, cysteine 99, cysteine 102, cysteine 105, and cysteine 109.

This sequence belongs to the complex I 23 kDa subunit family. As to quaternary structure, NDH-1 is composed of 14 different subunits. Subunits NuoA, H, J, K, L, M, N constitute the membrane sector of the complex. Requires [4Fe-4S] cluster as cofactor.

Its subcellular location is the cell inner membrane. The enzyme catalyses a quinone + NADH + 5 H(+)(in) = a quinol + NAD(+) + 4 H(+)(out). In terms of biological role, NDH-1 shuttles electrons from NADH, via FMN and iron-sulfur (Fe-S) centers, to quinones in the respiratory chain. The immediate electron acceptor for the enzyme in this species is believed to be ubiquinone. Couples the redox reaction to proton translocation (for every two electrons transferred, four hydrogen ions are translocated across the cytoplasmic membrane), and thus conserves the redox energy in a proton gradient. In Rickettsia peacockii (strain Rustic), this protein is NADH-quinone oxidoreductase subunit I.